Reading from the N-terminus, the 354-residue chain is Uroporphyrinogen decarboxylase (354 aa).

Substrate-binding positions include 27 to 31 (RQAGR), D77, Y154, T209, and H327.

Belongs to the uroporphyrinogen decarboxylase family. As to quaternary structure, homodimer.

It localises to the cytoplasm. The catalysed reaction is uroporphyrinogen III + 4 H(+) = coproporphyrinogen III + 4 CO2. It participates in porphyrin-containing compound metabolism; protoporphyrin-IX biosynthesis; coproporphyrinogen-III from 5-aminolevulinate: step 4/4. In terms of biological role, catalyzes the decarboxylation of four acetate groups of uroporphyrinogen-III to yield coproporphyrinogen-III. This Salmonella heidelberg (strain SL476) protein is Uroporphyrinogen decarboxylase.